A 339-amino-acid polypeptide reads, in one-letter code: Glycerol-3-phosphate dehydrogenase [NAD(P)+] (339 aa).

Residues Ser-15, Tyr-16, His-36, and Lys-110 each coordinate NADPH. 3 residues coordinate sn-glycerol 3-phosphate: Lys-110, Gly-139, and Thr-141. Ala-143 provides a ligand contact to NADPH. Positions 195, 248, 258, 259, and 260 each coordinate sn-glycerol 3-phosphate. The Proton acceptor role is filled by Lys-195. Arg-259 lines the NADPH pocket. NADPH is bound by residues Val-283 and Glu-285.

This sequence belongs to the NAD-dependent glycerol-3-phosphate dehydrogenase family.

It is found in the cytoplasm. The enzyme catalyses sn-glycerol 3-phosphate + NAD(+) = dihydroxyacetone phosphate + NADH + H(+). The catalysed reaction is sn-glycerol 3-phosphate + NADP(+) = dihydroxyacetone phosphate + NADPH + H(+). It functions in the pathway membrane lipid metabolism; glycerophospholipid metabolism. Its function is as follows. Catalyzes the reduction of the glycolytic intermediate dihydroxyacetone phosphate (DHAP) to sn-glycerol 3-phosphate (G3P), the key precursor for phospholipid synthesis. The polypeptide is Glycerol-3-phosphate dehydrogenase [NAD(P)+] (Enterobacter sp. (strain 638)).